Reading from the N-terminus, the 360-residue chain is N-acetylmuramoyl-L-alanine amidase CwlL (360 aa).

Residues M1–A39 form the signal peptide. In terms of domain architecture, N-acetylmuramoyl-L-alanine amidase spans L40–P154. 4 repeat units span residues R166–S191, L196–L259, K265–S289, and L291–L355. 2 X approximate repeats stretches follow at residues R166 to S289 and L196 to L355.

Belongs to the N-acetylmuramoyl-L-alanine amidase 2 family.

Its subcellular location is the secreted. It catalyses the reaction Hydrolyzes the link between N-acetylmuramoyl residues and L-amino acid residues in certain cell-wall glycopeptides.. The sequence is that of N-acetylmuramoyl-L-alanine amidase CwlL (cwlL) from Bacillus licheniformis.